We begin with the raw amino-acid sequence, 596 residues long: Leucine-rich repeat and IQ domain-containing protein 4 (596 aa).

22 LRR repeats span residues 22–44, 59–83, 84–106, 108–129, 130–152, 153–176, 177–200, 202–223, 224–246, 248–269, 270–293, 295–315, 317–337, 338–361, 362–384, 385–407, 410–433, 434–457, 459–479, 480–502, 504–525, and 527–549; these read LPRLHRFDIIDTFKTLTKELLRQ, LTDRTFFIDGSNQGLKTIPSEILAL, KELEEVHLENNQIAEIPQGIQQL, NTKVLYLHNNSLQDLCPELGAL, SSLESLDLSGNPLVISSLHVVSR, LRTLRELRLYRTGLTEIPTGICKS, LHHLELFGLSENFLESLPEEIVNQ, KLREIYLKQNHFEVFPCDLCVL, YNLEVIDLDENKLKSIPGDIGHL, RLQKFYVASNHLMSLPESLSQC, SKLSVLDLTHNSIHSLPSSLELLT, LTEVGLSGNRLEKVPRLLCSW, SLHLLYLRNTSLHGLRDSFKR, LINLRFLDLSQNHIEHFPVQICAL, KNLEILALDDNKVRQLPPSISLL, SNLKILGLTGNDLLSFPEEIFSL, LEKLYIGQDQGSKLSSLPENIKRL, MNLKELYIENNRLEQLPASLGLMP, LEVLDCRHNLLKQLPDAICRT, RNLRELLLEDNLLCCLPENLDHL, NLKVLTLMNNPMVDPPIYVCNQ, and NEAIWKHLKENRIRKMMATTIQA. One can recognise an IQ domain in the interval 540 to 569; that stretch reads RKMMATTIQAWWRGIMVRKGYGSYEELLKA. Residues 569–587 show a composition bias toward basic residues; the sequence is ARKKGKSPPKDKKGKKAAK. The disordered stretch occupies residues 569-596; the sequence is ARKKGKSPPKDKKGKKAAKGKPEKGNKK.

The chain is Leucine-rich repeat and IQ domain-containing protein 4 (Lrriq4) from Mus musculus (Mouse).